Reading from the N-terminus, the 363-residue chain is 3-dehydroquinate synthase (363 aa).

Residues 71 to 76 (DGEQYK), 105 to 109 (GVIGD), 129 to 130 (TT), lysine 142, lysine 151, and 169 to 172 (CLKT) contribute to the NAD(+) site. Zn(2+)-binding residues include glutamate 184, histidine 247, and histidine 264.

It belongs to the sugar phosphate cyclases superfamily. Dehydroquinate synthase family. Requires NAD(+) as cofactor. Co(2+) is required as a cofactor. Zn(2+) serves as cofactor.

The protein resides in the cytoplasm. It carries out the reaction 7-phospho-2-dehydro-3-deoxy-D-arabino-heptonate = 3-dehydroquinate + phosphate. It functions in the pathway metabolic intermediate biosynthesis; chorismate biosynthesis; chorismate from D-erythrose 4-phosphate and phosphoenolpyruvate: step 2/7. In terms of biological role, catalyzes the conversion of 3-deoxy-D-arabino-heptulosonate 7-phosphate (DAHP) to dehydroquinate (DHQ). This Vibrio vulnificus (strain CMCP6) protein is 3-dehydroquinate synthase.